Reading from the N-terminus, the 158-residue chain is NAD(P)H-quinone oxidoreductase subunit J, chloroplastic (158 aa).

The protein belongs to the complex I 30 kDa subunit family. In terms of assembly, NDH is composed of at least 16 different subunits, 5 of which are encoded in the nucleus.

The protein localises to the plastid. The protein resides in the chloroplast thylakoid membrane. The catalysed reaction is a plastoquinone + NADH + (n+1) H(+)(in) = a plastoquinol + NAD(+) + n H(+)(out). It carries out the reaction a plastoquinone + NADPH + (n+1) H(+)(in) = a plastoquinol + NADP(+) + n H(+)(out). Functionally, NDH shuttles electrons from NAD(P)H:plastoquinone, via FMN and iron-sulfur (Fe-S) centers, to quinones in the photosynthetic chain and possibly in a chloroplast respiratory chain. The immediate electron acceptor for the enzyme in this species is believed to be plastoquinone. Couples the redox reaction to proton translocation, and thus conserves the redox energy in a proton gradient. This chain is NAD(P)H-quinone oxidoreductase subunit J, chloroplastic, found in Citrus sinensis (Sweet orange).